A 221-amino-acid polypeptide reads, in one-letter code: Probable septum site-determining protein MinC (221 aa).

This sequence belongs to the MinC family. As to quaternary structure, interacts with MinD and FtsZ.

Cell division inhibitor that blocks the formation of polar Z ring septums. Rapidly oscillates between the poles of the cell to destabilize FtsZ filaments that have formed before they mature into polar Z rings. Prevents FtsZ polymerization. This Shewanella halifaxensis (strain HAW-EB4) protein is Probable septum site-determining protein MinC.